The sequence spans 213 residues: Thymidylate kinase (213 aa).

10–17 (GLEGAGKT) serves as a coordination point for ATP.

Belongs to the thymidylate kinase family.

It catalyses the reaction dTMP + ATP = dTDP + ADP. In terms of biological role, phosphorylation of dTMP to form dTDP in both de novo and salvage pathways of dTTP synthesis. This is Thymidylate kinase from Salmonella arizonae (strain ATCC BAA-731 / CDC346-86 / RSK2980).